Here is a 639-residue protein sequence, read N- to C-terminus: tRNA (uracil(54)-C(5))-methyltransferase (639 aa).

Residues 78–113 form a disordered region; sequence VPPTMKHTVDNKRLSSPLTDSGNRRTKKPKLRKYKA. Phosphoserine occurs at positions 92 and 93. Residues 101–113 are compositionally biased toward basic residues; that stretch reads RRTKKPKLRKYKA. The region spanning 163–228 is the TRAM domain; sequence LQYHREVKNV…PYYVESDLLD (66 aa). Positions 461, 496, 517, and 564 each coordinate S-adenosyl-L-methionine. The active-site Nucleophile is cysteine 591. The Proton acceptor role is filled by glutamate 631.

This sequence belongs to the class I-like SAM-binding methyltransferase superfamily. RNA M5U methyltransferase family.

The enzyme catalyses uridine(54) in tRNA + S-adenosyl-L-methionine = 5-methyluridine(54) in tRNA + S-adenosyl-L-homocysteine + H(+). In terms of biological role, catalyzes the formation of 5-methyl-uridine at position 54 (m5U54) in all tRNA. May also have a role in tRNA stabilization or maturation. In Saccharomyces cerevisiae (strain ATCC 204508 / S288c) (Baker's yeast), this protein is tRNA (uracil(54)-C(5))-methyltransferase (TRM2).